A 214-amino-acid chain; its full sequence is Urease accessory protein UreG (214 aa).

23–30 (GPVGSGKT) lines the GTP pocket.

It belongs to the SIMIBI class G3E GTPase family. UreG subfamily. As to quaternary structure, homodimer. UreD, UreF and UreG form a complex that acts as a GTP-hydrolysis-dependent molecular chaperone, activating the urease apoprotein by helping to assemble the nickel containing metallocenter of UreC. The UreE protein probably delivers the nickel.

It is found in the cytoplasm. Its function is as follows. Facilitates the functional incorporation of the urease nickel metallocenter. This process requires GTP hydrolysis, probably effectuated by UreG. The protein is Urease accessory protein UreG of Bordetella bronchiseptica (strain ATCC BAA-588 / NCTC 13252 / RB50) (Alcaligenes bronchisepticus).